A 150-amino-acid polypeptide reads, in one-letter code: Oleosin Ara h 10.0102 (150 aa).

The next 2 membrane-spanning stretches (helical) occupy residues 39–59 (VIAV…AGLA) and 73–93 (LFIL…LSVA).

Belongs to the oleosin family. Expressed in seeds (at protein level).

It is found in the lipid droplet. Its subcellular location is the membrane. May have a structural role to stabilize the lipid body during desiccation of the seed by preventing coalescence of the oil. Probably interacts with both lipid and phospholipid moieties of lipid bodies. May also provide recognition signals for specific lipase anchorage in lipolysis during seedling growth. The sequence is that of Oleosin Ara h 10.0102 from Arachis hypogaea (Peanut).